The primary structure comprises 445 residues: tRNA modification GTPase MnmE (445 aa).

(6S)-5-formyl-5,6,7,8-tetrahydrofolate is bound by residues R20, E79, and K119. Positions 215–371 (GLKLAIIGPP…ILKNIEEIAE (157 aa)) constitute a TrmE-type G domain. N225 is a K(+) binding site. GTP is bound by residues 225 to 230 (NAGKSS), 244 to 250 (SNIAGTT), and 269 to 272 (DTAG). S229 provides a ligand contact to Mg(2+). Residues S244, I246, and T249 each coordinate K(+). T250 is a Mg(2+) binding site. K445 serves as a coordination point for (6S)-5-formyl-5,6,7,8-tetrahydrofolate.

It belongs to the TRAFAC class TrmE-Era-EngA-EngB-Septin-like GTPase superfamily. TrmE GTPase family. Homodimer. Heterotetramer of two MnmE and two MnmG subunits. The cofactor is K(+).

The protein localises to the cytoplasm. Exhibits a very high intrinsic GTPase hydrolysis rate. Involved in the addition of a carboxymethylaminomethyl (cmnm) group at the wobble position (U34) of certain tRNAs, forming tRNA-cmnm(5)s(2)U34. This chain is tRNA modification GTPase MnmE, found in Rickettsia bellii (strain RML369-C).